A 107-amino-acid polypeptide reads, in one-letter code: uncharacterized protein (107 aa).

Positions 1-14 (MTERNASGRMNTKG) are enriched in polar residues. Residues 1–20 (MTERNASGRMNTKGRSIKET) are disordered.

Its subcellular location is the mitochondrion. This is an uncharacterized protein from Arabidopsis thaliana (Mouse-ear cress).